Reading from the N-terminus, the 206-residue chain is Thymidylate kinase (206 aa).

An ATP-binding site is contributed by 11-18 (GIDGAGKT).

The protein belongs to the thymidylate kinase family.

It carries out the reaction dTMP + ATP = dTDP + ADP. Functionally, phosphorylation of dTMP to form dTDP in both de novo and salvage pathways of dTTP synthesis. This Burkholderia cenocepacia (strain HI2424) protein is Thymidylate kinase.